Consider the following 330-residue polypeptide: Pantothenate synthetase 2 (330 aa).

H55 (proton donor) is an active-site residue. ATP contacts are provided by residues 167–170, V196, and 204–207; these read GEKD and ASSR.

The protein belongs to the pantothenate synthetase family. In terms of assembly, homodimer.

Its subcellular location is the cytoplasm. It catalyses the reaction (R)-pantoate + beta-alanine + ATP = (R)-pantothenate + AMP + diphosphate + H(+). Its pathway is cofactor biosynthesis; (R)-pantothenate biosynthesis; (R)-pantothenate from (R)-pantoate and beta-alanine: step 1/1. Functionally, catalyzes the condensation of pantoate with beta-alanine in an ATP-dependent reaction via a pantoyl-adenylate intermediate. The protein is Pantothenate synthetase 2 of Frankia alni (strain DSM 45986 / CECT 9034 / ACN14a).